The primary structure comprises 166 residues: Large ribosomal subunit protein uL10 (166 aa).

It belongs to the universal ribosomal protein uL10 family. Part of the ribosomal stalk of the 50S ribosomal subunit. The N-terminus interacts with L11 and the large rRNA to form the base of the stalk. The C-terminus forms an elongated spine to which L12 dimers bind in a sequential fashion forming a multimeric L10(L12)X complex.

Forms part of the ribosomal stalk, playing a central role in the interaction of the ribosome with GTP-bound translation factors. In Streptococcus agalactiae serotype III (strain NEM316), this protein is Large ribosomal subunit protein uL10.